The primary structure comprises 430 residues: Enolase (430 aa).

Position 167 (Gln-167) interacts with (2R)-2-phosphoglycerate. The active-site Proton donor is Glu-209. Residues Asp-246, Glu-289, and Asp-316 each coordinate Mg(2+). Residues Lys-341, Arg-370, Ser-371, and Lys-392 each coordinate (2R)-2-phosphoglycerate. The active-site Proton acceptor is the Lys-341.

Belongs to the enolase family. Component of the RNA degradosome, a multiprotein complex involved in RNA processing and mRNA degradation. It depends on Mg(2+) as a cofactor.

It localises to the cytoplasm. The protein resides in the secreted. The protein localises to the cell surface. The catalysed reaction is (2R)-2-phosphoglycerate = phosphoenolpyruvate + H2O. It participates in carbohydrate degradation; glycolysis; pyruvate from D-glyceraldehyde 3-phosphate: step 4/5. Its function is as follows. Catalyzes the reversible conversion of 2-phosphoglycerate (2-PG) into phosphoenolpyruvate (PEP). It is essential for the degradation of carbohydrates via glycolysis. This Idiomarina loihiensis (strain ATCC BAA-735 / DSM 15497 / L2-TR) protein is Enolase.